The primary structure comprises 291 residues: D-alanine--D-alanine ligase (291 aa).

Positions 99 to 291 (KRIVKSLGIN…FKKLISIIIT (193 aa)) constitute an ATP-grasp domain. Position 125-179 (125-179 (EWNKFPAVVKPVREGSSVGLKIVESLEELKEYALDLLKKTERVMVEEFVEGRDMT)) interacts with ATP. The Mg(2+) site is built by D245, E258, and N260.

The protein belongs to the D-alanine--D-alanine ligase family. Mg(2+) serves as cofactor. Requires Mn(2+) as cofactor.

It localises to the cytoplasm. It catalyses the reaction 2 D-alanine + ATP = D-alanyl-D-alanine + ADP + phosphate + H(+). It functions in the pathway cell wall biogenesis; peptidoglycan biosynthesis. Its function is as follows. Cell wall formation. In Aquifex aeolicus (strain VF5), this protein is D-alanine--D-alanine ligase.